The sequence spans 313 residues: Probable pyridoxal 5'-phosphate synthase subunit PDX1.2 (313 aa).

D42 provides a ligand contact to D-ribose 5-phosphate. Residue K99 is the Schiff-base intermediate with D-ribose 5-phosphate of the active site. Residue G171 participates in D-ribose 5-phosphate binding. D-glyceraldehyde 3-phosphate is bound at residue R183. Residues G232 and 253-254 (GS) contribute to the D-ribose 5-phosphate site.

This sequence belongs to the PdxS/SNZ family.

It carries out the reaction aldehydo-D-ribose 5-phosphate + D-glyceraldehyde 3-phosphate + L-glutamine = pyridoxal 5'-phosphate + L-glutamate + phosphate + 3 H2O + H(+). It participates in cofactor biosynthesis; pyridoxal 5'-phosphate biosynthesis. In terms of biological role, catalyzes the formation of pyridoxal 5'-phosphate from ribose 5-phosphate (RBP), glyceraldehyde 3-phosphate (G3P) and ammonia. The ammonia is provided by PDX2. Can also use ribulose 5-phosphate and dihydroxyacetone phosphate as substrates, resulting from enzyme-catalyzed isomerization of RBP and G3P, respectively. Also plays an indirect role in resistance to singlet oxygen-generating photosensitizers. This Oryza sativa subsp. japonica (Rice) protein is Probable pyridoxal 5'-phosphate synthase subunit PDX1.2 (PDX12).